The sequence spans 182 residues: Ribosome-recycling factor (182 aa).

It belongs to the RRF family.

The protein localises to the cytoplasm. In terms of biological role, responsible for the release of ribosomes from messenger RNA at the termination of protein biosynthesis. May increase the efficiency of translation by recycling ribosomes from one round of translation to another. This is Ribosome-recycling factor from Parasynechococcus marenigrum (strain WH8102).